A 382-amino-acid polypeptide reads, in one-letter code: Na(+)/H(+) antiporter NhaA 2 (382 aa).

Helical transmembrane passes span 11 to 31 (FSVP…LDPA), 45 to 65 (LSFH…IAAV), 91 to 111 (LGGV…VGLP), 116 to 136 (GWGI…RMVF), 145 to 165 (YLLL…ALFY), 171 to 191 (PVVA…WGLG), 197 to 214 (SYWP…IGLH), 287 to 307 (WLVL…FGLL), 324 to 344 (LLVA…VSGS), and 353 to 373 (AAAK…MLLG).

Belongs to the NhaA Na(+)/H(+) (TC 2.A.33) antiporter family.

The protein resides in the cell inner membrane. The enzyme catalyses Na(+)(in) + 2 H(+)(out) = Na(+)(out) + 2 H(+)(in). Its function is as follows. Na(+)/H(+) antiporter that extrudes sodium in exchange for external protons. The chain is Na(+)/H(+) antiporter NhaA 2 from Pelobacter propionicus (strain DSM 2379 / NBRC 103807 / OttBd1).